The following is a 226-amino-acid chain: PKHD-type hydroxylase HNE_2117 (226 aa).

One can recognise a Fe2OG dioxygenase domain in the interval 78–178 (TVLTPRFNRY…RLASFLWTQS (101 aa)). Fe cation contacts are provided by His-96, Asp-98, and His-159. Arg-169 serves as a coordination point for 2-oxoglutarate.

Fe(2+) is required as a cofactor. L-ascorbate serves as cofactor.

This is PKHD-type hydroxylase HNE_2117 from Hyphomonas neptunium (strain ATCC 15444).